Here is a 1025-residue protein sequence, read N- to C-terminus: Beta-galactosidase (1025 aa).

2 residues coordinate substrate: asparagine 103 and aspartate 202. Aspartate 202 is a binding site for Na(+). Mg(2+) contacts are provided by glutamate 417, histidine 419, and glutamate 462. Residues glutamate 462 and 538 to 541 (EYAH) each bind substrate. The active-site Proton donor is the glutamate 462. Glutamate 538 acts as the Nucleophile in catalysis. Mg(2+) is bound at residue asparagine 598. Na(+) contacts are provided by phenylalanine 602 and asparagine 605. Residues asparagine 605 and tryptophan 1003 each contribute to the substrate site.

The protein belongs to the glycosyl hydrolase 2 family. As to quaternary structure, homotetramer. Mg(2+) serves as cofactor. Requires Na(+) as cofactor.

It carries out the reaction Hydrolysis of terminal non-reducing beta-D-galactose residues in beta-D-galactosides.. This chain is Beta-galactosidase, found in Citrobacter koseri (strain ATCC BAA-895 / CDC 4225-83 / SGSC4696).